The primary structure comprises 297 residues: MATH domain and coiled-coil domain-containing protein At2g05420 (297 aa).

Residues 7 to 139 enclose the MATH domain; the sequence is SKTITWVIEN…NGELTLVAKV (133 aa). Positions 239–281 form a coiled coil; sequence KLDWLEKKHGEIKEKKKKEEASLKRLQEMEKQIFNEAQIYKEK.

This Arabidopsis thaliana (Mouse-ear cress) protein is MATH domain and coiled-coil domain-containing protein At2g05420.